A 69-amino-acid polypeptide reads, in one-letter code: MRRQKRDMFERAYLKGYRAGVSGRSKDLCPAANPQMRQEWINGWRDGRADHWDGYTGVSGIHRSPGIAS.

Belongs to the ribosome modulation factor family.

It is found in the cytoplasm. In terms of biological role, during stationary phase, converts 70S ribosomes to an inactive dimeric form (100S ribosomes). The chain is Ribosome modulation factor from Hahella chejuensis (strain KCTC 2396).